A 497-amino-acid polypeptide reads, in one-letter code: Keratin, type II cytoskeletal 8 (497 aa).

The tract at residues 2–108 (TSYQRTVTVR…DPRIGQVRLE (107 aa)) is head. Residues 109–149 (EKEQIKTLNNQFAGFIDKVRYLEQQNKLLETKWQLLQNQTT) form a coil 1A region. Residues 109–421 (EKEQIKTLNN…KLLEGEESRL (313 aa)) form the IF rod domain. The linker 1 stretch occupies residues 145-162 (QNQTTPSRSNLDSMFEAY). Residues 163–254 (ISNLRRQLDT…QIYDEEIREL (92 aa)) form a coil 1B region. The linker 12 stretch occupies residues 255–278 (QTQIQDTSVIVQMDNNRQLDLDNI). The tract at residues 279–417 (IAEVRAQYED…ATYRKLLEGE (139 aa)) is coil 2. Residues 418–497 (ESRLASGIQA…VSERSNIVKE (80 aa)) form a tail region.

This sequence belongs to the intermediate filament family. As to quaternary structure, heterotetramer of two type I and two type II keratins. Keratin-8 associates with keratin-18. As to expression, expressed in skin.

It localises to the cytoplasm. The protein localises to the nucleus. It is found in the nucleoplasm. The protein resides in the nucleus matrix. Together with KRT19, helps to link the contractile apparatus to dystrophin at the costameres of striated muscle. This Protopterus aethiopicus (Marbled lungfish) protein is Keratin, type II cytoskeletal 8.